Here is a 487-residue protein sequence, read N- to C-terminus: UL37 immediate early glycoprotein (487 aa).

Residues 1 to 22 form the signal peptide; sequence MSPVYVNLLGSVGLLAFWYFSY. The span at 83–107 shows a compositional bias: acidic residues; sequence GEESVTEDTEREDTEEEREDEEEEN. The disordered stretch occupies residues 83-121; sequence GEESVTEDTEREDTEEEREDEEEENEARTPEVNPIDAEG. Residues N206, N210, N219, N223, N242, N246, N275, N281, N294, N297, N306, N333, N337, N343, N379, N384, and N391 are each glycosylated (N-linked (GlcNAc...) asparagine; by host). The helical transmembrane segment at 433 to 459 threads the bilayer; the sequence is WALLSICTVAAGSIALLSLFCILLIGL.

This sequence belongs to the immediate early glycoprotein family. As to quaternary structure, interacts with host BAX. Interacts with host RSAD2/viperin; this interaction results in RSAD2/viperin relocalization from the endoplasmic reticulum to the mitochondria, actin cytoskeleton disruption and enhancement of infection. Interacts with host PEX19; this interaction inhibits the peroxisomal-dependent antiviral signaling. Interacts with host CHCHD6; this interaction rewires mitochondria by engaging the conserved MICOS complex.

The protein resides in the host endoplasmic reticulum membrane. It is found in the host Golgi apparatus membrane. Its subcellular location is the host mitochondrion membrane. The protein localises to the host peroxisome. Multifunctional transmembrane protein that plays several key roles in viral replication. Rapidely traffics from the host endoplasmic reticulum to the outer mitochondrial membrane where it acts to inhibit host immune response, block apoptotic signaling, regulate calcium flux, and induce mitochondrial fragmentation. Sequesters proapoptotic BAX at the outer mitochondrial membrane and prevents cytochrome c release and subsequent initiation of the proapoptotic cascade. Also provoques a calcium efflux from host endoplasmic reticulum and F-actin cytoskeleton disruption. Participates in the increase of host mitochondrial biogenesis, thus promoting viral replication by efficient use of newly made mitochondria. Additionally, a subset of vMIA localizes to peroxisomes, causing fragmentation and blocking peroxisomal MAVS signaling. Mechanistically, inhibits host MAVS oligomerization at peroxisomes in a mitochondrial fission factors (MFF)-dependent manner and in mitochondria independently of mitochondrial fission factors. Plays an essential role in the trafficking of host viperin/RSAD2 from the endoplasmic reticulum to the viral assembly compartment via the mitochondria during viral infection as failure of viperin to localize to the mitochondria results in insufficient lipogenesis and thus reduces viral replication. Its function is as follows. May play a role in escape from the host antiviral response. In Human cytomegalovirus (strain AD169) (HHV-5), this protein is UL37 immediate early glycoprotein (UL37).